The sequence spans 694 residues: Glycine--tRNA ligase beta subunit (694 aa).

It belongs to the class-II aminoacyl-tRNA synthetase family. As to quaternary structure, tetramer of two alpha and two beta subunits.

It is found in the cytoplasm. The catalysed reaction is tRNA(Gly) + glycine + ATP = glycyl-tRNA(Gly) + AMP + diphosphate. The protein is Glycine--tRNA ligase beta subunit of Lactiplantibacillus plantarum (strain ATCC BAA-793 / NCIMB 8826 / WCFS1) (Lactobacillus plantarum).